The primary structure comprises 328 residues: D-cysteine desulfhydrase (328 aa).

Lysine 51 carries the N6-(pyridoxal phosphate)lysine modification.

It belongs to the ACC deaminase/D-cysteine desulfhydrase family. In terms of assembly, homodimer. Pyridoxal 5'-phosphate serves as cofactor.

It catalyses the reaction D-cysteine + H2O = hydrogen sulfide + pyruvate + NH4(+) + H(+). Catalyzes the alpha,beta-elimination reaction of D-cysteine and of several D-cysteine derivatives. It could be a defense mechanism against D-cysteine. In Salmonella agona (strain SL483), this protein is D-cysteine desulfhydrase.